A 135-amino-acid chain; its full sequence is Large ribosomal subunit protein eL32 (135 aa).

Belongs to the eukaryotic ribosomal protein eL32 family.

The protein is Large ribosomal subunit protein eL32 of Methanococcus maripaludis (strain C7 / ATCC BAA-1331).